The chain runs to 291 residues: Protease HtpX (291 aa).

Helical transmembrane passes span 4–24 (VLLF…VLSV) and 37–57 (GGLL…SLLM). His143 provides a ligand contact to Zn(2+). Glu144 is an active-site residue. His147 provides a ligand contact to Zn(2+). The next 2 membrane-spanning stretches (helical) occupy residues 158–178 (LIQG…AGIV) and 198–218 (FAIS…IVMW). Residue Glu224 coordinates Zn(2+).

This sequence belongs to the peptidase M48B family. Requires Zn(2+) as cofactor.

It is found in the cell inner membrane. This chain is Protease HtpX, found in Tolumonas auensis (strain DSM 9187 / NBRC 110442 / TA 4).